Here is a 523-residue protein sequence, read N- to C-terminus: Bifunctional purine biosynthesis protein PurH (523 aa).

An MGS-like domain is found at 1–149; that stretch reads MSDPVIKRAL…KNNESVTVIT (149 aa).

Belongs to the PurH family.

The enzyme catalyses (6R)-10-formyltetrahydrofolate + 5-amino-1-(5-phospho-beta-D-ribosyl)imidazole-4-carboxamide = 5-formamido-1-(5-phospho-D-ribosyl)imidazole-4-carboxamide + (6S)-5,6,7,8-tetrahydrofolate. The catalysed reaction is IMP + H2O = 5-formamido-1-(5-phospho-D-ribosyl)imidazole-4-carboxamide. It participates in purine metabolism; IMP biosynthesis via de novo pathway; 5-formamido-1-(5-phospho-D-ribosyl)imidazole-4-carboxamide from 5-amino-1-(5-phospho-D-ribosyl)imidazole-4-carboxamide (10-formyl THF route): step 1/1. Its pathway is purine metabolism; IMP biosynthesis via de novo pathway; IMP from 5-formamido-1-(5-phospho-D-ribosyl)imidazole-4-carboxamide: step 1/1. The chain is Bifunctional purine biosynthesis protein PurH from Chlorobaculum parvum (strain DSM 263 / NCIMB 8327) (Chlorobium vibrioforme subsp. thiosulfatophilum).